A 158-amino-acid chain; its full sequence is MGAVTTDVEVASSVPAQTIYKGFLLDMDNIIPKVLPQAIKSIEIISGDGGAGTIKKVTLGEVSQFTVVKQRIDEIDAEALKYSYSIIEGDLLLGIIESITSKFTVVPTDGGCIVKNTTIYTPIGDAVIPEENVKEATEQSGMVFKAIEAYLLANPGAY.

It belongs to the BetVI family.

The protein is Pathogenesis-related protein 2 (PR2) of Petroselinum crispum (Parsley).